Here is a 340-residue protein sequence, read N- to C-terminus: Tryptophan--tRNA ligase (340 aa).

Residues 11-13 (RPT) and 19-20 (GH) each bind ATP. The 'HIGH' region signature appears at 12-20 (PTGKLHLGH). An L-tryptophan-binding site is contributed by Asp-140. ATP contacts are provided by residues 152-154 (GND), Leu-194, and 202-206 (KMSKS). The short motif at 202 to 206 (KMSKS) is the 'KMSKS' region element.

The protein belongs to the class-I aminoacyl-tRNA synthetase family. Homodimer.

Its subcellular location is the cytoplasm. It catalyses the reaction tRNA(Trp) + L-tryptophan + ATP = L-tryptophyl-tRNA(Trp) + AMP + diphosphate + H(+). In terms of biological role, catalyzes the attachment of tryptophan to tRNA(Trp). This Streptococcus mutans serotype c (strain ATCC 700610 / UA159) protein is Tryptophan--tRNA ligase.